The sequence spans 429 residues: Probable M18 family aminopeptidase 2 (429 aa).

Residues His82, His156, and His401 each coordinate Zn(2+).

The protein belongs to the peptidase M18 family. The cofactor is Zn(2+).

The sequence is that of Probable M18 family aminopeptidase 2 from Pseudomonas aeruginosa (strain UCBPP-PA14).